A 145-amino-acid chain; its full sequence is L-alanine exporter AlaE (145 aa).

4 helical membrane passes run 16-36, 42-62, 86-106, and 111-131; these read FALV…LSGM, LSSR…YGLY, LFAY…VIGA, and ILTA…TYGY.

The protein belongs to the AlaE exporter family.

It is found in the cell inner membrane. Exports L-alanine. The polypeptide is L-alanine exporter AlaE (Pectobacterium parmentieri (strain WPP163) (Pectobacterium wasabiae (strain WPP163))).